The chain runs to 157 residues: Polyferredoxin protein VhcB (157 aa).

4Fe-4S ferredoxin-type domains lie at 23–52 (NGIS…VVNP), 62–92 (KTER…MGKI), and 100–129 (DRIE…LNEE). The [4Fe-4S] cluster site is built by Cys-32, Cys-35, Cys-38, Cys-42, Cys-72, Cys-75, Cys-78, Cys-82, Cys-109, Cys-112, Cys-115, Cys-119, Cys-136, Cys-139, Cys-142, and Cys-146.

Requires [4Fe-4S] cluster as cofactor.

The polypeptide is Polyferredoxin protein VhcB (vhcB) (Methanococcus voltae).